An 89-amino-acid chain; its full sequence is Small ribosomal subunit protein uS15 (89 aa).

The protein belongs to the universal ribosomal protein uS15 family. As to quaternary structure, part of the 30S ribosomal subunit. Forms a bridge to the 50S subunit in the 70S ribosome, contacting the 23S rRNA.

Functionally, one of the primary rRNA binding proteins, it binds directly to 16S rRNA where it helps nucleate assembly of the platform of the 30S subunit by binding and bridging several RNA helices of the 16S rRNA. Its function is as follows. Forms an intersubunit bridge (bridge B4) with the 23S rRNA of the 50S subunit in the ribosome. The polypeptide is Small ribosomal subunit protein uS15 (Rhizobium rhizogenes (strain K84 / ATCC BAA-868) (Agrobacterium radiobacter)).